The primary structure comprises 173 residues: Adenine phosphoribosyltransferase (173 aa).

It belongs to the purine/pyrimidine phosphoribosyltransferase family. Homodimer.

The protein localises to the cytoplasm. The catalysed reaction is AMP + diphosphate = 5-phospho-alpha-D-ribose 1-diphosphate + adenine. It participates in purine metabolism; AMP biosynthesis via salvage pathway; AMP from adenine: step 1/1. Functionally, catalyzes a salvage reaction resulting in the formation of AMP, that is energically less costly than de novo synthesis. This is Adenine phosphoribosyltransferase from Chloroflexus aurantiacus (strain ATCC 29366 / DSM 635 / J-10-fl).